Reading from the N-terminus, the 180-residue chain is Adenine phosphoribosyltransferase (180 aa).

The protein belongs to the purine/pyrimidine phosphoribosyltransferase family. In terms of assembly, homodimer.

Its subcellular location is the cytoplasm. The enzyme catalyses AMP + diphosphate = 5-phospho-alpha-D-ribose 1-diphosphate + adenine. Its pathway is purine metabolism; AMP biosynthesis via salvage pathway; AMP from adenine: step 1/1. Functionally, catalyzes a salvage reaction resulting in the formation of AMP, that is energically less costly than de novo synthesis. This is Adenine phosphoribosyltransferase from Pasteurella multocida (strain Pm70).